A 444-amino-acid polypeptide reads, in one-letter code: MAEETQVLVKFVTKLPAHLRVPETPVAVPSDLKRYGLSQIINHLLALDPPRPFDFLIDGELVRKSLEQHLLAHNLSAESTLEVEYVPAVVPPQQKNSTPHDDWVSSVDGSRCAPASSSGGSPSGVVVSGSYDGLLRLWNGDLEAVASVSAHAGGVNCVRFLPKSQGDLLLTSGKDRLVKMWQLSSSEEEDAGPSCRLVATYRGHEDGVEAVAASPSGRRFASCGWDGKLLVWEGGEQLRWAAGTAEASKKKRKTGTANGSAAAGAGGADLRGHLHCVSSVAWPAENSLFSGGWDHSVRRWDVSSGAAADTYNGSKAVLCIASHAASPALVAFGCSDRALRLWDTRGKAGSDALAVTTQGAHGGWVTAVAWCPSSQHHIASASHDGTIKMWDIRTQIPLGMLSHHTDKVLALGWLGGAEAGHARGLVSGGADCQLRMYESDYIVS.

The interval 7 to 87 (VLVKFVTKLP…ESTLEVEYVP (81 aa)) is ubiquitin-like (UBL) domain. A disordered region spans residues 91-123 (PPQQKNSTPHDDWVSSVDGSRCAPASSSGGSPS). 3 WD repeats span residues 105–148 (SSVD…VASV), 150–191 (AHAG…EEDA), and 203–242 (GHED…RWAA). Residues 243-264 (GTAEASKKKRKTGTANGSAAAG) form a disordered region. WD repeat units lie at residues 272–310 (GHLH…AADT), 312–352 (NGSK…GSDA), 360–400 (AHGG…PLGM), and 403–444 (HHTD…YIVS).

It belongs to the WD repeat WDR12/YTM1 family.

The protein resides in the nucleus. It localises to the nucleolus. Its subcellular location is the nucleoplasm. Its function is as follows. Required for maturation of ribosomal RNAs and formation of the large ribosomal subunit. The sequence is that of Ribosome biogenesis protein WDR12 homolog from Chlamydomonas reinhardtii (Chlamydomonas smithii).